The primary structure comprises 311 residues: 2-dehydro-3-deoxygluconokinase (311 aa).

Substrate contacts are provided by residues 34–35 (GS), 106–108 (YYR), and Arg166. Residues 164–166 (NIR), 224–229 (KLGPKG), 253–256 (GAGD), and Ser283 each bind ATP. 2 residues coordinate substrate: Gly253 and Asp256. The active-site Proton acceptor is the Asp256. Residue Asp292 coordinates substrate.

This sequence belongs to the carbohydrate kinase PfkB family. In terms of assembly, homotetramer. The cofactor is a divalent metal cation.

The catalysed reaction is 2-dehydro-3-deoxy-D-gluconate + ATP = 2-dehydro-3-deoxy-6-phospho-D-gluconate + ADP + H(+). Its pathway is carbohydrate acid metabolism; 2-dehydro-3-deoxy-D-gluconate degradation; D-glyceraldehyde 3-phosphate and pyruvate from 2-dehydro-3-deoxy-D-gluconate: step 1/2. Functionally, involved in the degradation of glucose via the semi-phosphorylative Entner-Doudoroff pathway. Catalyzes the phosphorylation of 2-keto-3-deoxygluconate (KDG) to produce 2-keto-3-deoxy-6-phosphogluconate (KDPG). Can also use GTP, but not ADP or AMP, as a phosphoryl donor and 2-keto-D-gluconate (KG) as a phosphoryl acceptor. This chain is 2-dehydro-3-deoxygluconokinase, found in Sulfurisphaera tokodaii (strain DSM 16993 / JCM 10545 / NBRC 100140 / 7) (Sulfolobus tokodaii).